A 191-amino-acid polypeptide reads, in one-letter code: Neuronal calcium sensor 1 (191 aa).

Residue G2 is the site of N-myristoyl glycine attachment. 4 EF-hand domains span residues 24-59, 60-95, 96-131, and 144-179; these read EAEI…FPFG, DPSK…TSRG, TVEE…IYRM, and TPEK…DPTI. Residues D73, N75, D77, E84, D109, D111, D113, E120, D157, N159, D161, K163, and E168 each coordinate Ca(2+).

The protein belongs to the recoverin family.

Functionally, neuronal calcium sensor, regulator of G protein-coupled receptor phosphorylation in a calcium dependent manner. Regulates neurite extension and branching by activity-dependent (Ca2+) influx in growth cones. This Aplysia californica (California sea hare) protein is Neuronal calcium sensor 1.